The primary structure comprises 304 residues: Ribosomal RNA small subunit methyltransferase H (304 aa).

S-adenosyl-L-methionine contacts are provided by residues 37–39 (GGH), aspartate 57, phenylalanine 79, aspartate 100, and histidine 107.

The protein belongs to the methyltransferase superfamily. RsmH family.

It localises to the cytoplasm. It catalyses the reaction cytidine(1402) in 16S rRNA + S-adenosyl-L-methionine = N(4)-methylcytidine(1402) in 16S rRNA + S-adenosyl-L-homocysteine + H(+). Specifically methylates the N4 position of cytidine in position 1402 (C1402) of 16S rRNA. This Bacteroides fragilis (strain YCH46) protein is Ribosomal RNA small subunit methyltransferase H.